The sequence spans 68 residues: Neuronal regeneration-related protein (68 aa).

The interval Glu-42–Phe-68 is disordered.

As to quaternary structure, interacts with FLNA. Interacts with the latency-associated peptides (LAP) of TGFB1 and TGFB2; the interaction results in a decrease in TGFB autoinduction. In terms of processing, phosphorylated on Ser-59. Phosphorylation decreases stability and activity. Expressed in brain and fetal lung.

It localises to the cytoplasm. May have roles in cellular differentiation. Ectopic expression induces differentiation of fibroblast into myofibroblast and myofibroblast ameboid migration. Increases retinoic-acid regulation of lipid-droplet biogenesis. May also have neural functions. Promotes axonal regeneration and augments motility of gliomas. Down-regulates the expression of TGFB1 and TGFB2 but not of TGFB3. May play a role in the regulation of alveolar generation. In Mus musculus (Mouse), this protein is Neuronal regeneration-related protein (Nrep).